The sequence spans 383 residues: Arginine biosynthesis bifunctional protein ArgJ 1 (383 aa).

Residues methionine 1 to aspartate 25 form a disordered region. Substrate contacts are provided by threonine 146, lysine 168, threonine 179, glutamate 259, asparagine 378, and serine 383. Threonine 179 serves as the catalytic Nucleophile.

The protein belongs to the ArgJ family. In terms of assembly, heterotetramer of two alpha and two beta chains.

It localises to the cytoplasm. It carries out the reaction N(2)-acetyl-L-ornithine + L-glutamate = N-acetyl-L-glutamate + L-ornithine. It catalyses the reaction L-glutamate + acetyl-CoA = N-acetyl-L-glutamate + CoA + H(+). Its pathway is amino-acid biosynthesis; L-arginine biosynthesis; L-ornithine and N-acetyl-L-glutamate from L-glutamate and N(2)-acetyl-L-ornithine (cyclic): step 1/1. It functions in the pathway amino-acid biosynthesis; L-arginine biosynthesis; N(2)-acetyl-L-ornithine from L-glutamate: step 1/4. Its function is as follows. Catalyzes two activities which are involved in the cyclic version of arginine biosynthesis: the synthesis of N-acetylglutamate from glutamate and acetyl-CoA as the acetyl donor, and of ornithine by transacetylation between N(2)-acetylornithine and glutamate. This is Arginine biosynthesis bifunctional protein ArgJ 1 from Streptomyces clavuligerus.